Here is a 521-residue protein sequence, read N- to C-terminus: Probable inorganic phosphate transporter 1-3 (521 aa).

The Cytoplasmic segment spans residues 1-24 (MADQQLGVLKALDVAKTQLYHFTA). The helical transmembrane segment at 25 to 45 (IVIAGMGFFTDAYDLFCVSLV) threads the bilayer. Residues 46–70 (TKLLGRLYYFNPTSAKPGSLPPHVA) lie on the Extracellular side of the membrane. A helical transmembrane segment spans residues 71 to 91 (AAVNGVALCGTLAGQLFFGWL). The Cytoplasmic segment spans residues 92-99 (GDKLGRKK). Residues 100-120 (VYGITLIMMILCSVASGLSLG) form a helical membrane-spanning segment. At 121-131 (NSAKGVMTTLC) the chain is on the extracellular side. The helical transmembrane segment at 132–152 (FFRFWLGFGIGGDYPLSATIM) threads the bilayer. Over 153–161 (SEYANKKTR) the chain is Cytoplasmic. A helical membrane pass occupies residues 162–182 (GAFIAAVFAMQGVGILAGGFV). The Extracellular portion of the chain corresponds to 183-211 (ALAVSSIFDKKFPSPTYEQDRFLSTPPQA). The chain crosses the membrane as a helical span at residues 212–232 (DYIWRIIVMFGALPAALTYYW). Residues 233–292 (RMKMPETARYTALVAKNIKQATADMSKVLQTDLELEERVEDDVKDPKKNYGLFSKEFLRR) lie on the Cytoplasmic side of the membrane. Residues 293–313 (HGLHLLGTTSTWFLLDIAFYS) form a helical membrane-spanning segment. Residues 314-348 (QNLFQKDIFSAIGWIPKAATMNAIHEVFKIARAQT) lie on the Extracellular side of the membrane. Residues 349–369 (LIALCSTVPGYWFTVAFIDII) form a helical membrane-spanning segment. Topologically, residues 370–371 (GR) are cytoplasmic. The helical transmembrane segment at 372 to 392 (FAIQLMGFFMMTVFMFAIAFP) threads the bilayer. Residues 393-402 (YNHWILPDNR) lie on the Extracellular side of the membrane. A helical transmembrane segment spans residues 403–423 (IGFVVMYSLTFFFANFGPNAT). The Cytoplasmic segment spans residues 424–441 (TFIVPAEIFPARLRSTCH). A helical transmembrane segment spans residues 442 to 462 (GISAATGKAGAIVGAFGFLYA). The Extracellular portion of the chain corresponds to 463-484 (AQPQDKTKTDAGYPPGIGVKNS). Residues 485–505 (LIMLGVINFVGMLFTFLVPEP) traverse the membrane as a helical segment. Residues 506–521 (KGKSLEELSGEAEVDK) lie on the Cytoplasmic side of the membrane.

The protein belongs to the major facilitator superfamily. Phosphate:H(+) symporter (TC 2.A.1.9) family. As to expression, mainly expressed in roots, especially in the stele of the primary root, the pericycle and trichoblasts of secondary roots. To a lower extent, present in hydathodes and vascular tissues of young leaves.

The protein resides in the membrane. Its function is as follows. High-affinity transporter for external inorganic phosphate. The protein is Probable inorganic phosphate transporter 1-3 (PHT1-3) of Arabidopsis thaliana (Mouse-ear cress).